We begin with the raw amino-acid sequence, 585 residues long: A-type ATP synthase subunit A (585 aa).

231 to 238 contacts ATP; it reads GPFGSGKT.

It belongs to the ATPase alpha/beta chains family. Has multiple subunits with at least A(3), B(3), C, D, E, F, H, I and proteolipid K(x).

The protein resides in the cell membrane. The catalysed reaction is ATP + H2O + 4 H(+)(in) = ADP + phosphate + 5 H(+)(out). In terms of biological role, component of the A-type ATP synthase that produces ATP from ADP in the presence of a proton gradient across the membrane. The A chain is the catalytic subunit. This chain is A-type ATP synthase subunit A, found in Thermococcus gammatolerans (strain DSM 15229 / JCM 11827 / EJ3).